Consider the following 319-residue polypeptide: MDTSTSVTYDSSLQISQFILMGLPGIHEWQHWLSLPLTLLYLLALGANLLIIITIQHETVLHEPMYHLLGILAVVDIGLATTIMPKILAIFWFDAKAISLPMCFAQIYAIHCFFCIESGIFLCMAVDRYIAICRPLQYPSIVTKAFVFKATGFIMLRNGLLTIPVPILAAQRHYCSRNEIEHCLCSNLGVISLACDDITVNKFYQLMLAWVLVGSDMALVFSSYAVILHSVLRLNSAEAMSKALSTCSSHLILILFHTGIIVLSVTHLAEKKIPLIPVFLNVLHNVIPPALNPLACALRMHKLRLGFQRLLGLGQDVSK.

Topologically, residues 1–31 (MDTSTSVTYDSSLQISQFILMGLPGIHEWQH) are extracellular. A helical transmembrane segment spans residues 32–52 (WLSLPLTLLYLLALGANLLII). Residues 53 to 60 (ITIQHETV) lie on the Cytoplasmic side of the membrane. Residues 61–81 (LHEPMYHLLGILAVVDIGLAT) traverse the membrane as a helical segment. The Extracellular portion of the chain corresponds to 82–105 (TIMPKILAIFWFDAKAISLPMCFA). C103 and C195 form a disulfide bridge. The helical transmembrane segment at 106–126 (QIYAIHCFFCIESGIFLCMAV) threads the bilayer. Residues 127-145 (DRYIAICRPLQYPSIVTKA) lie on the Cytoplasmic side of the membrane. A helical membrane pass occupies residues 146–166 (FVFKATGFIMLRNGLLTIPVP). The Extracellular portion of the chain corresponds to 167-202 (ILAAQRHYCSRNEIEHCLCSNLGVISLACDDITVNK). Residues 203 to 223 (FYQLMLAWVLVGSDMALVFSS) traverse the membrane as a helical segment. The Cytoplasmic segment spans residues 224-243 (YAVILHSVLRLNSAEAMSKA). The helical transmembrane segment at 244–263 (LSTCSSHLILILFHTGIIVL) threads the bilayer. The Extracellular segment spans residues 264–277 (SVTHLAEKKIPLIP). The helical transmembrane segment at 278 to 298 (VFLNVLHNVIPPALNPLACAL) threads the bilayer. At 299-319 (RMHKLRLGFQRLLGLGQDVSK) the chain is on the cytoplasmic side.

Belongs to the G-protein coupled receptor 1 family.

It localises to the cell membrane. Functionally, odorant receptor. The chain is Olfactory receptor 56B4 (OR56B4) from Homo sapiens (Human).